A 247-amino-acid polypeptide reads, in one-letter code: Probable transcriptional regulatory protein lpg1286 (247 aa).

It belongs to the TACO1 family.

Its subcellular location is the cytoplasm. This Legionella pneumophila subsp. pneumophila (strain Philadelphia 1 / ATCC 33152 / DSM 7513) protein is Probable transcriptional regulatory protein lpg1286.